Here is a 60-residue protein sequence, read N- to C-terminus: Large ribosomal subunit protein uL30 (60 aa).

The protein belongs to the universal ribosomal protein uL30 family. As to quaternary structure, part of the 50S ribosomal subunit.

This chain is Large ribosomal subunit protein uL30, found in Lachnoclostridium phytofermentans (strain ATCC 700394 / DSM 18823 / ISDg) (Clostridium phytofermentans).